Reading from the N-terminus, the 232-residue chain is 2-C-methyl-D-erythritol 4-phosphate cytidylyltransferase (232 aa).

Belongs to the IspD/TarI cytidylyltransferase family. IspD subfamily.

The catalysed reaction is 2-C-methyl-D-erythritol 4-phosphate + CTP + H(+) = 4-CDP-2-C-methyl-D-erythritol + diphosphate. It functions in the pathway isoprenoid biosynthesis; isopentenyl diphosphate biosynthesis via DXP pathway; isopentenyl diphosphate from 1-deoxy-D-xylulose 5-phosphate: step 2/6. Functionally, catalyzes the formation of 4-diphosphocytidyl-2-C-methyl-D-erythritol from CTP and 2-C-methyl-D-erythritol 4-phosphate (MEP). The sequence is that of 2-C-methyl-D-erythritol 4-phosphate cytidylyltransferase from Vibrio cholerae serotype O1 (strain ATCC 39315 / El Tor Inaba N16961).